The primary structure comprises 273 residues: Polyamine aminopropyltransferase (273 aa).

One can recognise a PABS domain in the interval 5–238 (ENWFSERYSD…GFWSFTIASE (234 aa)). Glutamine 34 lines the S-methyl-5'-thioadenosine pocket. Spermidine-binding residues include histidine 65 and aspartate 90. Residues glutamate 109 and 140–141 (DG) each bind S-methyl-5'-thioadenosine. Aspartate 158 functions as the Proton acceptor in the catalytic mechanism. 158–161 (DSTD) serves as a coordination point for spermidine. Proline 165 contacts S-methyl-5'-thioadenosine.

It belongs to the spermidine/spermine synthase family. In terms of assembly, homodimer or homotetramer.

It is found in the cytoplasm. The catalysed reaction is S-adenosyl 3-(methylsulfanyl)propylamine + putrescine = S-methyl-5'-thioadenosine + spermidine + H(+). Its pathway is amine and polyamine biosynthesis; spermidine biosynthesis; spermidine from putrescine: step 1/1. In terms of biological role, catalyzes the irreversible transfer of a propylamine group from the amino donor S-adenosylmethioninamine (decarboxy-AdoMet) to putrescine (1,4-diaminobutane) to yield spermidine. This Thermoplasma volcanium (strain ATCC 51530 / DSM 4299 / JCM 9571 / NBRC 15438 / GSS1) protein is Polyamine aminopropyltransferase.